We begin with the raw amino-acid sequence, 179 residues long: Translationally-controlled tumor protein homolog (179 aa).

The TCTP domain occupies 1 to 179; it reads MIIYKDIISG…WKHGLEEMKV (179 aa).

Belongs to the TCTP family.

It is found in the cytoplasm. It localises to the cytoskeleton. Functionally, involved in protein synthesis. Involved in microtubule stabilization. Involved in osmoadaptation. The protein is Translationally-controlled tumor protein homolog of Emericella nidulans (strain FGSC A4 / ATCC 38163 / CBS 112.46 / NRRL 194 / M139) (Aspergillus nidulans).